We begin with the raw amino-acid sequence, 495 residues long: Fibronectin type III and SPRY domain-containing protein 1 (495 aa).

Residues 4 to 99 are a coiled coil; that stretch reads QKESLRKIIT…ALESSEELLE (96 aa). The 58-residue stretch at 105–162 folds into the COS domain; sequence LCSSENDSFTQAAKDIKDSVTMAPAFRLSLKAKASDSMNHMMVDFTHERNLLQSITFL. A Fibronectin type-III domain is found at 164 to 268; that stretch reads VPATPEIHVA…EPVTLETHAF (105 aa). Residues 281–476 form the B30.2/SPRY domain; sequence LKVEDLSVEW…VQTGLQVPSI (196 aa). Residues 306–332 are disordered; that stretch reads KNRTNSPMHSPARTAMMSPKRAPSARV. Position 490 is a phosphoserine (serine 490).

As to quaternary structure, oligomerization is required for binding to microtubules.

The protein localises to the cytoplasm. It localises to the cytoskeleton. It is found in the microtubule organizing center. The protein resides in the centrosome. Its subcellular location is the nucleus. The protein localises to the cleavage furrow. Its function is as follows. May be involved in microtubule organization and stabilization. The polypeptide is Fibronectin type III and SPRY domain-containing protein 1 (fsd1) (Danio rerio (Zebrafish)).